The chain runs to 121 residues: Small ribosomal subunit protein uS13 (121 aa).

A disordered region spans residues 88-121 (GMRHRRGLPVRGQHTKNNARTRKGKAVAIANKKK).

The protein belongs to the universal ribosomal protein uS13 family. Part of the 30S ribosomal subunit. Forms a loose heterodimer with protein S19. Forms two bridges to the 50S subunit in the 70S ribosome.

Functionally, located at the top of the head of the 30S subunit, it contacts several helices of the 16S rRNA. In the 70S ribosome it contacts the 23S rRNA (bridge B1a) and protein L5 of the 50S subunit (bridge B1b), connecting the 2 subunits; these bridges are implicated in subunit movement. Contacts the tRNAs in the A and P-sites. The chain is Small ribosomal subunit protein uS13 from Limosilactobacillus reuteri subsp. reuteri (strain JCM 1112) (Lactobacillus reuteri).